We begin with the raw amino-acid sequence, 282 residues long: Bifunctional protein FolD (282 aa).

NADP(+)-binding positions include Gly-166–Ser-168 and Ile-232.

This sequence belongs to the tetrahydrofolate dehydrogenase/cyclohydrolase family. As to quaternary structure, homodimer.

It catalyses the reaction (6R)-5,10-methylene-5,6,7,8-tetrahydrofolate + NADP(+) = (6R)-5,10-methenyltetrahydrofolate + NADPH. It carries out the reaction (6R)-5,10-methenyltetrahydrofolate + H2O = (6R)-10-formyltetrahydrofolate + H(+). Its pathway is one-carbon metabolism; tetrahydrofolate interconversion. Catalyzes the oxidation of 5,10-methylenetetrahydrofolate to 5,10-methenyltetrahydrofolate and then the hydrolysis of 5,10-methenyltetrahydrofolate to 10-formyltetrahydrofolate. The chain is Bifunctional protein FolD from Histophilus somni (strain 129Pt) (Haemophilus somnus).